A 194-amino-acid chain; its full sequence is Probable GTP-binding protein EngB (194 aa).

The region spanning 22 to 194 is the EngB-type G domain; sequence DLPEYALAGR…AWQFIKEGME (173 aa). GTP-binding positions include 30-37, 57-61, 75-78, 142-145, and 174-176; these read GRSNVGKS, GKTQT, DVPG, TKAD, and FSS. The Mg(2+) site is built by Ser-37 and Thr-59.

It belongs to the TRAFAC class TrmE-Era-EngA-EngB-Septin-like GTPase superfamily. EngB GTPase family. Mg(2+) serves as cofactor.

Its function is as follows. Necessary for normal cell division and for the maintenance of normal septation. This chain is Probable GTP-binding protein EngB, found in Listeria monocytogenes serovar 1/2a (strain ATCC BAA-679 / EGD-e).